The following is a 1561-amino-acid chain: ABC-type transporter phomO' (1561 aa).

A run of 7 helical transmembrane segments spans residues 34 to 54 (LYFE…LLAA), 110 to 130 (CTAG…CTTV), 139 to 159 (SVPA…LAHF), 172 to 192 (SSSL…APLV), 202 to 222 (GSAL…LIAV), 314 to 334 (LGLY…FTLA), and 358 to 378 (GLIG…GWYW). The region spanning 326-599 (LCLAGFTLAQ…LLQIIPSFGA (274 aa)) is the ABC transmembrane type-1 1 domain. Asn384 carries an N-linked (GlcNAc...) asparagine glycan. Helical transmembrane passes span 428–448 (LAYA…TWML), 452–472 (VGPP…TSTY), 535–555 (LIVG…VLVF), and 577–597 (LIWI…IPSF). Residues 645–871 (IHNSSFSYTD…VEDENGDVDN (227 aa)) enclose the ABC transporter 1 domain. N-linked (GlcNAc...) asparagine glycosylation is present at Asn647. 678-685 (GPAGCGKS) contributes to the ATP binding site. Asn721 carries N-linked (GlcNAc...) asparagine glycosylation. The segment at 853-899 (YQFPPSQADVEDENGDVDNGAENTRPRESSHTTEAQSGPPEPKSKPT) is disordered. 4 helical membrane passes run 913–933 (SIGF…AFCL), 969–989 (VLPL…IVPL), 1037–1054 (LFNT…VILI), and 1147–1167 (LVLN…AVGL). The ABC transmembrane type-1 2 domain occupies 920–1209 (VLFIGGGIIF…LLTAWTSLET (290 aa)). An N-linked (GlcNAc...) asparagine glycan is attached at Asn1189. Positions 1229–1238 (DVLVRPDSLD) are enriched in basic and acidic residues. The interval 1229 to 1298 (DVLVRPDSLD…DVAADGEKHE (70 aa)) is disordered. Residues 1269–1280 (YDDDDESDENTD) show a composition bias toward acidic residues. One can recognise an ABC transporter 2 domain in the interval 1297–1545 (HEATTITTTS…SDIFAFFGRS (249 aa)). 1333–1340 (GRTGSGKS) contacts ATP. Residue Asn1496 is glycosylated (N-linked (GlcNAc...) asparagine).

It belongs to the ABC transporter superfamily. ABCC family. Conjugate transporter (TC 3.A.1.208) subfamily.

The protein resides in the membrane. In terms of biological role, ABC-type transporter; part of the gene cluster that mediates the biosynthesis of the phomopsins, a group of hexapeptide mycotoxins which infects lupins and causes lupinosis disease in livestock. This is ABC-type transporter phomO' from Diaporthe leptostromiformis (Lupinosis disease fungus).